Consider the following 880-residue polypeptide: Protein transport protein SEC23 A (880 aa).

Polar residues predominate over residues 1 to 13 (MANLPKSSVNYPG). The segment at 1–95 (MANLPKSSVN…PPGPPVFNTP (95 aa)) is disordered. Positions 20 to 36 (PNRPSPQPDRTPVPHSP) are enriched in pro residues. The span at 57-70 (MSSPSMKSPSLLSP) shows a compositional bias: low complexity. The Zn(2+) site is built by C204, C207, C226, and C229. The interval 204–229 (CLNCGAYSNPYSSILIGSGQWQCVIC) is zinc finger-like.

It belongs to the SEC23/SEC24 family. SEC24 subfamily. As to quaternary structure, component of the coat protein complex II (COPII), composed of at least five proteins: the Sec23/24 complex, the Sec13/31 complex and Sar1. As to expression, mostly expressed in seedlings, roots, cotyledons, leaves, trichomes, leaf primordia and flowers, and, to a lower extent, in mature siliques.

The protein localises to the cytoplasmic vesicle. Its subcellular location is the COPII-coated vesicle membrane. It localises to the endoplasmic reticulum membrane. The protein resides in the membrane. Functionally, component of the coat protein complex II (COPII) which promotes the formation of transport vesicles from the endoplasmic reticulum (ER). The coat has two main functions, the physical deformation of the endoplasmic reticulum membrane into vesicles and the selection of cargo molecules. May contribute to COPII-coated vesicles formation and ER-Golgi vesicle transport. Together with SEC23D, essential for pollen wall development and exine patterning, probably by regulating endoplasmic reticulum (ER) export of lipids and proteins (e.g. sporopollenin) necessary for pollen wall formation. Also involved in plastid physiology in anther tapetal cells. This chain is Protein transport protein SEC23 A, found in Arabidopsis thaliana (Mouse-ear cress).